The chain runs to 390 residues: MIDYTAAGFTLLQGAHLYAPEDRGICDVLVANGKIIAVASNIPSDIVPNCTVVDLSGQILCPGFIDQHVHLIGGGGEAGPTTRTPEVALSRLTEAGVTSVVGLLGTDSISRHPESLLAKTRALNEEGISAWMLTGAYHVPSRTITGSVEKDVAIIDRVIGVKCAISDHRSAAPDVYHLANMAAESRVGGLLGGKPGVTVFHMGDSKKALQPIYDLLENCDVPISKLLPTHVNRNVPLFEQALEFARKGGTIDITSSIDEPVAPAEGIARAVQAGIPLARVTLSSDGNGSQPFFDDEGNLTHIGVAGFETLLETVQVLVKDYDFSISDALRPLTSSVAGFLNLTGKGEILPGNDADLLVMTPELRIEQVYARGKLMVKDGKACVKGTFETA.

The Zn(2+) site is built by H68 and H70. Residues 75–77, T106, and Y137 contribute to the substrate site; that span reads GGE. Residue K162 coordinates Zn(2+). Residue K162 is modified to N6-carboxylysine. Residue R169 participates in substrate binding. Positions 201 and 230 each coordinate Zn(2+). R233 is a binding site for substrate. Position 285 (D285) interacts with Zn(2+). The Proton acceptor role is filled by D285. S289 contacts substrate.

Belongs to the peptidase M38 family. It depends on Zn(2+) as a cofactor. Co(2+) serves as cofactor. Carboxylation allows a single lysine to coordinate two zinc ions.

It localises to the cytoplasm. With respect to regulation, P-hydroxymercuribenzoate causes a slight inhibition (8 to 17 %). Iodoacetamide, o-iodosobenzoate and ammonium persulfate do not inhibit the enzyme activity. Catalyzes the hydrolytic cleavage of a subset of L-isoaspartyl (L-beta-aspartyl) dipeptides. Used to degrade proteins damaged by L-isoaspartyl residues formation. The best substrate for the enzyme reported thus far is iso-Asp-Leu. This Escherichia coli (strain K12) protein is Isoaspartyl dipeptidase (iadA).